A 523-amino-acid chain; its full sequence is DELLA protein RGL3 (523 aa).

The disordered stretch occupies residues 1-28; that stretch reads MKRSHQETSVEEEAPSMVEKLENGCGGG. The short motif at 34 to 38 is the DELLA motif element; that stretch reads DEFLA. Residues 56–60 carry the LEXLE motif motif; it reads LEQLE. The VHYNP motif signature appears at 78–82; it reads VHYNP. The GRAS domain maps to 148 to 516; it reads VLIEETGVRL…KPLIAASAWK (369 aa). Positions 155–209 are leucine repeat I (LRI); sequence VRLVQALVACAEAVQLENLSLADALVKRVGLLAASQAGAMGKVATYFAEALARRI. The VHIID stretch occupies residues 228–293; sequence QMNFYDSCPY…GGPPSFRLTG (66 aa). The VHIID motif lies at 259-263; the sequence is VHVID. A leucine repeat II (LRII) region spans residues 305-337; the sequence is ELGWKLAQLAQAIGVEFKFNGLTTERLSDLEPD. The PFYRE stretch occupies residues 348–437; the sequence is LVVNSVFELH…EVYLGRQILN (90 aa). Residues 356–360 carry the LXXLL motif motif; it reads LHPVL. An SAW region spans residues 440 to 516; the sequence is ATEGSDRIER…KPLIAASAWK (77 aa).

This sequence belongs to the GRAS family. DELLA subfamily. Interacts directly with the GID2/SLY1 component of the SCF(GID2) complex, suggesting that it may be ubiquitinated. Interacts (via N-terminus) with GID1A, GID1B and GID1B (via N-terminus). Interacts with the BOI proteins BOI, BRG1, BRG2 and BRG3. Post-translationally, phosphorylated. In terms of processing, may be ubiquitinated. As to expression, expressed at very low level. Mainly expressed in germinating seeds and flowers and siliques. Not expressed in other tissues.

The protein resides in the nucleus. Probable transcriptional regulator that acts as a repressor of the gibberellin (GA) signaling pathway. No effect of the BOI proteins on its stability. Probably acts by participating in large multiprotein complexes that repress transcription of GA-inducible genes. Its activity may be regulated by phytohormones such as auxin and ethylene. The sequence is that of DELLA protein RGL3 (RGL3) from Arabidopsis thaliana (Mouse-ear cress).